Consider the following 864-residue polypeptide: Alpha-glucosidase (864 aa).

The first 22 residues, 1-22 (MAKVSFIFVAIALITGNVLCQT), serve as a signal peptide directing secretion. N-linked (GlcNAc...) asparagine glycans are attached at residues N187, N364, and N406. D430 (nucleophile) is an active-site residue. E433 is a catalytic residue. Residues N466 and N500 are each glycosylated (N-linked (GlcNAc...) asparagine). D567 acts as the Proton donor in catalysis. N-linked (GlcNAc...) asparagine glycans are attached at residues N568 and N734.

It belongs to the glycosyl hydrolase 31 family.

It catalyses the reaction Hydrolysis of terminal, non-reducing (1-&gt;4)-linked alpha-D-glucose residues with release of alpha-D-glucose.. Functionally, hydrolyzes not only malto-oligosaccharides but also soluble starch. This chain is Alpha-glucosidase, found in Mucor javanicus.